A 315-amino-acid polypeptide reads, in one-letter code: Putative serine/threonine-protein phosphatase PP2A-4 catalytic subunit (315 aa).

Mn(2+) contacts are provided by Asp63, His65, Asp91, and Asn123. His124 acts as the Proton donor in catalysis. Mn(2+) is bound by residues His173 and His247.

This sequence belongs to the PPP phosphatase family. PP-2A subfamily. Requires Mn(2+) as cofactor.

It is found in the cytoplasm. The enzyme catalyses O-phospho-L-seryl-[protein] + H2O = L-seryl-[protein] + phosphate. It catalyses the reaction O-phospho-L-threonyl-[protein] + H2O = L-threonyl-[protein] + phosphate. The chain is Putative serine/threonine-protein phosphatase PP2A-4 catalytic subunit (PP2A4) from Oryza sativa subsp. indica (Rice).